A 248-amino-acid chain; its full sequence is Coproheme decarboxylase (248 aa).

Residues Arg130, 144 to 148 (YPMDK), His171, Gln184, and Ser222 each bind Fe-coproporphyrin III. Residue Tyr144 is part of the active site.

The protein belongs to the ChdC family. Type 1 subfamily. Requires Fe-coproporphyrin III as cofactor.

It carries out the reaction Fe-coproporphyrin III + 2 H2O2 + 2 H(+) = heme b + 2 CO2 + 4 H2O. The catalysed reaction is Fe-coproporphyrin III + H2O2 + H(+) = harderoheme III + CO2 + 2 H2O. It catalyses the reaction harderoheme III + H2O2 + H(+) = heme b + CO2 + 2 H2O. It functions in the pathway porphyrin-containing compound metabolism; protoheme biosynthesis. In terms of biological role, involved in coproporphyrin-dependent heme b biosynthesis. Catalyzes the decarboxylation of Fe-coproporphyrin III (coproheme) to heme b (protoheme IX), the last step of the pathway. The reaction occurs in a stepwise manner with a three-propionate intermediate. The chain is Coproheme decarboxylase from Geobacillus sp. (strain WCH70).